The following is a 60-amino-acid chain: UPF0434 protein Ssed_2824 (60 aa).

The protein belongs to the UPF0434 family.

This chain is UPF0434 protein Ssed_2824, found in Shewanella sediminis (strain HAW-EB3).